Reading from the N-terminus, the 156-residue chain is MIQTQATRTARQELTEVIILAKARKDLSFAQIVDGTGLSEAFVTAALLGQHPLPESAAKVVGDKLDLDADQVALLQSMPVRGSFFDGVPSDPTIYRFYEMMSVYGTTLKALVHEKFGDGIISAINFKLDIKKVEDPDGGHRAVITLDGKYLPTKPF.

Active-site residues include Arg-96, Glu-99, and Ser-122.

This sequence belongs to the cyanase family.

It carries out the reaction cyanate + hydrogencarbonate + 3 H(+) = NH4(+) + 2 CO2. In terms of biological role, catalyzes the reaction of cyanate with bicarbonate to produce ammonia and carbon dioxide. The protein is Cyanate hydratase of Pseudomonas putida (strain W619).